The sequence spans 141 residues: ATP synthase epsilon chain (141 aa).

It belongs to the ATPase epsilon chain family. In terms of assembly, F-type ATPases have 2 components, CF(1) - the catalytic core - and CF(0) - the membrane proton channel. CF(1) has five subunits: alpha(3), beta(3), gamma(1), delta(1), epsilon(1). CF(0) has three main subunits: a, b and c.

It is found in the cell inner membrane. In terms of biological role, produces ATP from ADP in the presence of a proton gradient across the membrane. This chain is ATP synthase epsilon chain, found in Burkholderia cenocepacia (strain ATCC BAA-245 / DSM 16553 / LMG 16656 / NCTC 13227 / J2315 / CF5610) (Burkholderia cepacia (strain J2315)).